The chain runs to 1544 residues: Lysine-specific demethylase 5B (1544 aa).

Residues 32–73 (CPVFEPSWEEFADPFAFIHKIRPIAEQTGICKVRPPPDWQPP) enclose the JmjN domain. The 91-residue stretch at 97–187 (TRVKLNFLDQ…ILNPYNLFLS (91 aa)) folds into the ARID domain. Glycyl lysine isopeptide (Lys-Gly) (interchain with G-Cter in SUMO2) cross-links involve residues lysine 148, lysine 204, lysine 209, lysine 242, lysine 274, and lysine 278. The tract at residues 201–230 (TDTKDKEYKPHDIPQRQSVQPSETCPPARR) is disordered. Basic and acidic residues predominate over residues 202-214 (DTKDKEYKPHDIP). Residues 309–359 (LYVCLLCGSGNDEDRLLLCDGCDDSYHTFCLIPPLHDVPKGDWRCPKCLAQ) form a PHD-type 1 zinc finger. Tyrosine 425 provides a ligand contact to 2-oxoglutarate. A JmjC domain is found at 453 to 619 (EYLDSGWNLN…LGRQCVEHYR (167 aa)). Fe cation-binding residues include histidine 499 and glutamate 501. 2-oxoglutarate is bound by residues serine 507, asparagine 509, and lysine 517. A Fe cation-binding site is contributed by histidine 587. A C5HC2 zinc finger spans residues 692 to 744 (CVKCKTTCFMSAISCSCKPGLLVCLHHVKELCSCPPYKYKLRYRYTLDDLYPM). Residue lysine 769 forms a Glycyl lysine isopeptide (Lys-Gly) (interchain with G-Cter in SUMO2) linkage. Lysine 832 bears the N6-acetyllysine mark. Residue serine 986 is modified to Phosphoserine. Residues 1176-1224 (IKICLCQKAPAAPMIQCELCRDAFHTSCVAVPSISQGLRIWLCPHCRRS) form a PHD-type 2 zinc finger. Serine 1328 carries the phosphoserine modification. The disordered stretch occupies residues 1374-1400 (PSPAQQTDRSSPVRPSSEKNDCCRGKR). Over residues 1376-1387 (PAQQTDRSSPVR) the composition is skewed to polar residues. A compositionally biased stretch (basic and acidic residues) spans 1389–1400 (SSEKNDCCRGKR). Lysine 1450 participates in a covalent cross-link: Glycyl lysine isopeptide (Lys-Gly) (interchain with G-Cter in SUMO2). A Phosphoserine modification is found at serine 1456. The segment at 1484-1538 (DAICPAVSCLQPEGDEVDWVQCDGSCNQWFHQVCVGVSPEMAEKEDYICVRCTVK) adopts a PHD-type 3 zinc-finger fold.

It belongs to the JARID1 histone demethylase family. In terms of assembly, interacts with FOXG1B, PAX9, MYC, MYCN and RB1. Interacts with HDAC1, HDAC4, HDAC5 and HDAC7. Interacts (via PHD-type 1 zinc finger) with histone H3 unmodified at 'Lys-4'; the interaction is inhibited when histone H3 is methylated at 'Arg-2' or 'Lys-4'. The cofactor is Fe(2+). As to expression, ubiquitously expressed, with highest levels in testis. Down-regulated in melanoma and glioblastoma. Up-regulated in breast cancer (at protein level).

The protein resides in the nucleus. It catalyses the reaction N(6),N(6),N(6)-trimethyl-L-lysyl(4)-[histone H3] + 3 2-oxoglutarate + 3 O2 = L-lysyl(4)-[histone H3] + 3 formaldehyde + 3 succinate + 3 CO2. Its activity is regulated as follows. Several specific inhibitors are being developed and tested. The inhibitor KDOAM-25 inhibits its demethylase activity, resulting to cell cycle arrest in myeloma cells. Histone demethylase that demethylates 'Lys-4' of histone H3, thereby playing a central role in histone code. Does not demethylate histone H3 'Lys-9' or H3 'Lys-27'. Demethylates trimethylated, dimethylated and monomethylated H3 'Lys-4'. Acts as a transcriptional corepressor for FOXG1B and PAX9. Favors the proliferation of breast cancer cells by repressing tumor suppressor genes such as BRCA1 and HOXA5. In contrast, may act as a tumor suppressor for melanoma. Represses the CLOCK-BMAL1 heterodimer-mediated transcriptional activation of the core clock component PER2. In Homo sapiens (Human), this protein is Lysine-specific demethylase 5B (KDM5B).